The chain runs to 385 residues: Glucose-fructose oxidoreductase domain-containing protein 2 (385 aa).

A signal peptide spans 1 to 25 (MKMLPGVGVFGTGSSARVLVPLLRA).

This sequence belongs to the Gfo/Idh/MocA family.

The protein resides in the secreted. The protein localises to the extracellular space. It is found in the extracellular matrix. Promotes matrix assembly. The sequence is that of Glucose-fructose oxidoreductase domain-containing protein 2 (GFOD2) from Bos taurus (Bovine).